We begin with the raw amino-acid sequence, 200 residues long: uncharacterized protein (200 aa).

A helical transmembrane segment spans residues 7-29; it reads FFFLFSFISHAMMLTGLIGSSSF.

It is found in the membrane. This is an uncharacterized protein from Saccharomyces cerevisiae (strain ATCC 204508 / S288c) (Baker's yeast).